The following is a 1341-amino-acid chain: DNA-directed RNA polymerase subunit beta (1341 aa).

This sequence belongs to the RNA polymerase beta chain family. The RNAP catalytic core consists of 2 alpha, 1 beta, 1 beta' and 1 omega subunit. When a sigma factor is associated with the core the holoenzyme is formed, which can initiate transcription.

The enzyme catalyses RNA(n) + a ribonucleoside 5'-triphosphate = RNA(n+1) + diphosphate. DNA-dependent RNA polymerase catalyzes the transcription of DNA into RNA using the four ribonucleoside triphosphates as substrates. This is DNA-directed RNA polymerase subunit beta from Photobacterium profundum (strain SS9).